The following is a 150-amino-acid chain: Macrodomain Ter protein (150 aa).

This sequence belongs to the MatP family. As to quaternary structure, homodimer.

The protein resides in the cytoplasm. Required for spatial organization of the terminus region of the chromosome (Ter macrodomain) during the cell cycle. Prevents early segregation of duplicated Ter macrodomains during cell division. Binds specifically to matS, which is a 13 bp signature motif repeated within the Ter macrodomain. In Shigella boydii serotype 18 (strain CDC 3083-94 / BS512), this protein is Macrodomain Ter protein.